The following is a 319-amino-acid chain: MLFATLEHILTHISFSTISIVITIHLITLLVRELGGLRDSSEKGMIVTFFSITGFLVSRWASSGHFPLSNLYESLIFLSWALYILHTIPKIQNSKNDLSTITTPSTILTQGFATSGLLTEMHQSTILVPALQSQWLMMHVSMMLLSYATLLCGSLLSAAILIIRFRNNFHFFSKKKKNVLHKTFLFSDFYAKRSALKSTSVPSFPNYYKYQLTERLDSWSYRVISLGFTLLTIGILCGAVWANEAWGSYWNWDPKETWAFITWTIFAIYLHSRTNQNWKGTNSALVASIGFLIIWICYFGINLLGIGLHSYGSFTLTPK.

The next 7 helical transmembrane spans lie at 9–29 (ILTHISFSTISIVITIHLITL), 44–64 (GMIVTFFSITGFLVSRWASSG), 68–88 (LSNLYESLIFLSWALYILHTI), 143–163 (MLLSYATLLCGSLLSAAILII), 223–243 (VISLGFTLLTIGILCGAVWAN), 257–271 (TWAFITWTIFAIYLH), and 286–306 (VASIGFLIIWICYFGINLLGI).

Belongs to the CcmF/CycK/Ccl1/NrfE/CcsA family. In terms of assembly, may interact with Ccs1.

The protein localises to the plastid. Its subcellular location is the chloroplast thylakoid membrane. In terms of biological role, required during biogenesis of c-type cytochromes (cytochrome c6 and cytochrome f) at the step of heme attachment. This is Cytochrome c biogenesis protein CcsA from Agrostis stolonifera (Creeping bentgrass).